Here is a 224-residue protein sequence, read N- to C-terminus: Ribonuclease T (224 aa).

An Exonuclease domain is found at 32–206; it reads VVVDVETGGF…YDTEKTAELF (175 aa). Positions 35, 37, 193, and 198 each coordinate Mg(2+). Histidine 193 acts as the Proton donor/acceptor in catalysis.

This sequence belongs to the RNase T family. In terms of assembly, homodimer. It depends on Mg(2+) as a cofactor.

Its function is as follows. Trims short 3' overhangs of a variety of RNA species, leaving a one or two nucleotide 3' overhang. Responsible for the end-turnover of tRNA: specifically removes the terminal AMP residue from uncharged tRNA (tRNA-C-C-A). Also appears to be involved in tRNA biosynthesis. This chain is Ribonuclease T, found in Pseudomonas fluorescens (strain Pf0-1).